A 231-amino-acid chain; its full sequence is Protein N-terminal glutamine amidohydrolase (231 aa).

The disordered stretch occupies residues M1–L21. Over residues T11–L21 the composition is skewed to pro residues. Residues C33, H89, and D108 contribute to the active site.

This sequence belongs to the NTAQ1 family. As to quaternary structure, monomer.

The catalysed reaction is N-terminal L-glutaminyl-[protein] + H2O = N-terminal L-glutamyl-[protein] + NH4(+). Its function is as follows. Mediates the side-chain deamidation of N-terminal glutamine residues to glutamate, an important step in N-end rule pathway of protein degradation. Conversion of the resulting N-terminal glutamine to glutamate renders the protein susceptible to arginylation, polyubiquitination and degradation as specified by the N-end rule. Does not act on substrates with internal or C-terminal glutamine and does not act on non-glutamine residues in any position. The sequence is that of Protein N-terminal glutamine amidohydrolase from Oryza sativa subsp. indica (Rice).